The chain runs to 351 residues: Glucose 1-dehydrogenase 1 (351 aa).

Cysteine 39 contributes to the Zn(2+) binding site. Substrate is bound at residue threonine 41. Residues histidine 64 and glutamate 65 each coordinate Zn(2+). Residues glutamate 113 and glutamate 149 each contribute to the substrate site. Glutamate 149 is a binding site for Zn(2+). Residues 182–185, 265–267, and 292–294 each bind NADP(+); these read AGPI, LGI, and ATN. Asparagine 294 contributes to the substrate binding site.

Belongs to the zinc-containing alcohol dehydrogenase family. Glucose 1-dehydrogenase subfamily. The cofactor is Zn(2+).

The enzyme catalyses D-glucose + NAD(+) = D-glucono-1,5-lactone + NADH + H(+). The catalysed reaction is D-glucose + NADP(+) = D-glucono-1,5-lactone + NADPH + H(+). In terms of biological role, catalyzes the NAD(P)(+)-dependent oxidation of D-glucose to D-gluconate via gluconolactone. Can utilize both NAD(+) and NADP(+) as electron acceptor. Is involved in the degradation of glucose through a non-phosphorylative variant of the Entner-Doudoroff pathway. This Vulcanisaeta moutnovskia (strain 768-28) protein is Glucose 1-dehydrogenase 1.